Consider the following 372-residue polypeptide: D-alanine--D-alanine ligase (372 aa).

Positions 145–349 (KTVLRAGGIP…CPNLLDQLIE (205 aa)) constitute an ATP-grasp domain. 176 to 231 (DRWGTSELFVKAVSLGSSVATLPVKTETEFTKAVKEVFRYDDRLMVEPRIRGREIE) is an ATP binding site. 3 residues coordinate Mg(2+): D303, E316, and N318.

It belongs to the D-alanine--D-alanine ligase family. Mg(2+) serves as cofactor. Mn(2+) is required as a cofactor.

The protein resides in the cytoplasm. It catalyses the reaction 2 D-alanine + ATP = D-alanyl-D-alanine + ADP + phosphate + H(+). Its pathway is cell wall biogenesis; peptidoglycan biosynthesis. Cell wall formation. The chain is D-alanine--D-alanine ligase from Coxiella burnetii (strain CbuK_Q154) (Coxiella burnetii (strain Q154)).